The primary structure comprises 78 residues: Exodeoxyribonuclease 7 small subunit (78 aa).

The protein belongs to the XseB family. In terms of assembly, heterooligomer composed of large and small subunits.

The protein localises to the cytoplasm. The catalysed reaction is Exonucleolytic cleavage in either 5'- to 3'- or 3'- to 5'-direction to yield nucleoside 5'-phosphates.. Bidirectionally degrades single-stranded DNA into large acid-insoluble oligonucleotides, which are then degraded further into small acid-soluble oligonucleotides. In Desulfitobacterium hafniense (strain Y51), this protein is Exodeoxyribonuclease 7 small subunit.